Here is a 263-residue protein sequence, read N- to C-terminus: Endonuclease 8 (263 aa).

The active-site Schiff-base intermediate with DNA is P2. The active-site Proton donor is the E3. K53 acts as the Proton donor; for beta-elimination activity in catalysis. Residues Q70, R125, and N169 each contribute to the DNA site. The FPG-type zinc-finger motif lies at K229 to K263. R253 acts as the Proton donor; for delta-elimination activity in catalysis.

This sequence belongs to the FPG family. Zn(2+) is required as a cofactor.

The enzyme catalyses 2'-deoxyribonucleotide-(2'-deoxyribose 5'-phosphate)-2'-deoxyribonucleotide-DNA = a 3'-end 2'-deoxyribonucleotide-(2,3-dehydro-2,3-deoxyribose 5'-phosphate)-DNA + a 5'-end 5'-phospho-2'-deoxyribonucleoside-DNA + H(+). Its function is as follows. Involved in base excision repair of DNA damaged by oxidation or by mutagenic agents. Acts as a DNA glycosylase that recognizes and removes damaged bases. Has a preference for oxidized pyrimidines, such as thymine glycol, 5,6-dihydrouracil and 5,6-dihydrothymine. Has AP (apurinic/apyrimidinic) lyase activity and introduces nicks in the DNA strand. Cleaves the DNA backbone by beta-delta elimination to generate a single-strand break at the site of the removed base with both 3'- and 5'-phosphates. In Salmonella typhimurium (strain SL1344), this protein is Endonuclease 8.